The sequence spans 369 residues: N-methyltransferase imqF (369 aa).

The protein belongs to the methyltransferase superfamily.

It participates in secondary metabolite biosynthesis. Functionally, N-methyltransferase; part of the gene cluster that mediates the biosynthesis of imizoquins A to D, tripeptide-derived alkaloids that serve a protective role against oxidative stress that are essential for normal germination. ImqB is a canonical three-module NRPS that assembles the tripeptide backbone of the imizoquins via condensation of Trp, Tyr, and Leu-derived precursors. N-methylation by imqF and phenol oxidation by imqC, followed by cyclization via the FAD-dependent oxidase imqH carry out the three-step transformation of L-tyrosine into tetrahydroisoquinoline. Importantly, this sequence requires the presence of a free amine in the tyrosine moiety, indicating that isoquinoline formation occurs prior to peptide bond formation. The imidazolidin-4-one ring of imizoquins could form following additional oxidation of the methyl-derived bridgehead carbon by imqH. Lastly, O-methylation by imqG and leucine hydroxylation by imqE complete biosynthesis of the imizoquins. The sequence is that of N-methyltransferase imqF from Aspergillus flavus (strain ATCC 200026 / FGSC A1120 / IAM 13836 / NRRL 3357 / JCM 12722 / SRRC 167).